We begin with the raw amino-acid sequence, 513 residues long: Bifunctional pantoate ligase/cytidylate kinase (513 aa).

Positions 1–282 (MGTFHRLTTT…VGQTRLIDNC (282 aa)) are pantoate--beta-alanine ligase. Residue 32 to 39 (MGALHGGH) participates in ATP binding. Histidine 39 functions as the Proton donor in the catalytic mechanism. (R)-pantoate is bound at residue glutamine 63. Glutamine 63 serves as a coordination point for beta-alanine. 152-155 (GQKD) serves as a coordination point for ATP. Glutamine 158 serves as a coordination point for (R)-pantoate. ATP is bound by residues valine 181 and 189–192 (LSSR). Residues 283–513 (LLDRRRPILA…HLYRSRFPQP (231 aa)) form a cytidylate kinase region.

In the N-terminal section; belongs to the pantothenate synthetase family. It in the C-terminal section; belongs to the cytidylate kinase family. Type 1 subfamily.

It localises to the cytoplasm. The enzyme catalyses (R)-pantoate + beta-alanine + ATP = (R)-pantothenate + AMP + diphosphate + H(+). The catalysed reaction is CMP + ATP = CDP + ADP. It catalyses the reaction dCMP + ATP = dCDP + ADP. It functions in the pathway cofactor biosynthesis; (R)-pantothenate biosynthesis; (R)-pantothenate from (R)-pantoate and beta-alanine: step 1/1. In terms of biological role, catalyzes the condensation of pantoate with beta-alanine in an ATP-dependent reaction via a pantoyl-adenylate intermediate. Its function is as follows. Catalyzes the transfer of a phosphate group from ATP to either CMP or dCMP to form CDP or dCDP and ADP, respectively. The chain is Bifunctional pantoate ligase/cytidylate kinase from Thermosynechococcus vestitus (strain NIES-2133 / IAM M-273 / BP-1).